The primary structure comprises 144 residues: Aspartate carbamoyltransferase regulatory chain (144 aa).

Zn(2+)-binding residues include Cys103, Cys108, Cys132, and Cys135.

This sequence belongs to the PyrI family. As to quaternary structure, contains catalytic and regulatory chains. Zn(2+) is required as a cofactor.

Its function is as follows. Involved in allosteric regulation of aspartate carbamoyltransferase. This is Aspartate carbamoyltransferase regulatory chain from Clostridium tetani (strain Massachusetts / E88).